The chain runs to 209 residues: Homeobox protein ceh-2 (209 aa).

The span at 1–14 (MTLKFSVERLVDSE) shows a compositional bias: basic and acidic residues. 2 disordered regions span residues 1 to 46 (MTLK…KSGK) and 181 to 209 (HKRVRLEGSDPNAPMSNDEDDEDDKKSVS). Acidic residues predominate over residues 15–24 (KESEEADVEE). A DNA-binding region (homeobox) is located at residues 126 to 185 (NKRIRTAFSASQLIQLEKAFEGNHYVVGNERKQLAAKLSLTETQVKVWFQNRRTKHKRVR).

The protein belongs to the EMX homeobox family. In the anterior pharynx, expressed in the I3 interneuron, the NSM and M3 motor neuron pairs, the three m2 muscle cells and the three e2 epithelial cells (at protein level).

It is found in the nucleus. In terms of biological role, required for activity of the M3 pharyngeal motor neuron. The protein is Homeobox protein ceh-2 of Caenorhabditis elegans.